A 316-amino-acid polypeptide reads, in one-letter code: NAC domain-containing protein 2 (316 aa).

Residues 17 to 170 (LPPGFRFHPT…DWVLCRLYNK (154 aa)) form the NAC domain. The DNA-binding element occupies 114-176 (LGIKKALVFY…LYNKKNEWEK (63 aa)). A disordered region spans residues 185-210 (EEASDMVTSQSHSHTHSWGETRTPES). Over residues 190–200 (MVTSQSHSHTH) the composition is skewed to polar residues.

Forms homodimer. Interacts with NAC071. As to expression, expressed in roots and stamens.

It is found in the nucleus. Its function is as follows. Transcription factor that possesses transactivation activity. Transcription activator involved in response to abiotic stresses. Plays a positive role during dehydration and salt stress. Binds specifically to the 5'-CATGTG-3' motif found in promoters of stress-responsive genes. This is NAC domain-containing protein 2 from Oryza sativa subsp. japonica (Rice).